A 180-amino-acid polypeptide reads, in one-letter code: uncharacterized protein (180 aa).

This is an uncharacterized protein from Homo sapiens (Human).